Here is a 1129-residue protein sequence, read N- to C-terminus: Serine/threonine-protein kinase LATS1 (1129 aa).

The segment covering 1 to 11 has biased composition (basic and acidic residues); that stretch reads MKRGEKPEGYR. Residues 1–71 form a disordered region; that stretch reads MKRGEKPEGY…PRQVRNPPKF (71 aa). Positions 19 to 30 are enriched in polar residues; sequence PASNYPGSSRQM. Positions 46–64 are enriched in basic and acidic residues; that stretch reads DASKAEHNLNKMSTEDPRQ. The 42-residue stretch at 100 to 141 folds into the UBA domain; it reads EVNPQMFQDLQAAGFDEDMVIQALQKTNNRSIEAAVEFISKM. Disordered stretches follow at residues 148-216 and 228-276; these read REQM…RPLS and PSNG…QTKR. Over residues 235–268 the composition is skewed to pro residues; that stretch reads NPPPPPQVRSVTPPPPPRGQTPPPRGTTPPPPSW. Position 246 is a phosphothreonine (threonine 246). Serine 278 bears the Phosphoserine mark. 4 disordered regions span residues 292-317, 363-407, 432-492, and 513-630; these read PPGAWQEGYPPPPLTTSPMNPPSQAQ, PTGS…VPQS, WPQS…TPAP, and PTHP…ESRI. Pro residues predominate over residues 300-312; that stretch reads YPPPPLTTSPMNP. Residues 372-375 carry the PPxY motif 1 motif; that stretch reads PPPY. Residues 380-392 show a composition bias toward polar residues; the sequence is ANGQSPSALQTGA. Residues 433-445 are compositionally biased toward low complexity; it reads PQSSSAPAQSSPS. A compositionally biased stretch (polar residues) spans 453–481; the sequence is WQPNIPVRSNSFNNPLGSRASHSANSQPS. Serine 463 carries the phosphoserine; by NUAK1 and NUAK2 modification. 2 stretches are compositionally biased toward low complexity: residues 482–492 and 520–530; these read ATTVTAITPAP and PQPVQTVQPTP. An interaction with YAP1 region spans residues 525-654; sequence TVQPTPFSEG…HVENVLKSHQ (130 aa). The short motif at 555-558 is the PPxY motif 2 element; it reads PPPY. A compositionally biased stretch (basic and acidic residues) spans 578 to 608; that stretch reads PCKDEQPSLPKEDDSEKSADSGDSGDKEKKQ. Serine 612 bears the Phosphoserine mark. Over residues 620–629 the composition is skewed to basic and acidic residues; sequence KKDEERRESR. Phosphoserine is present on serine 673. The 306-residue stretch at 704-1009 folds into the Protein kinase domain; it reads FVKIKTLGIG…ADEIKAHPFF (306 aa). Residues 710–718 and lysine 733 contribute to the ATP site; that span reads LGIGAFGEV. Residue aspartate 827 is the Proton acceptor of the active site. Serine 908 is subject to Phosphoserine; by STK3/MST2. In terms of domain architecture, AGC-kinase C-terminal spans 1010–1089; sequence KTIDFSSDLR…RRFFDDNGYP (80 aa). Threonine 1078 carries the phosphothreonine; by STK3/MST2 modification. The segment at 1104-1129 is disordered; it reads QGSEQQSDEDDQHTSSDGNNRDLVYV.

This sequence belongs to the protein kinase superfamily. AGC Ser/Thr protein kinase family. Complexes with CDK1 in early mitosis. LATS1-associated CDK1 has no mitotic cyclin partner and no apparent kinase activity. Binds phosphorylated ZYX, locating this protein to the mitotic spindle and suggesting a role for actin regulatory proteins during mitosis. Binds to and colocalizes with LIMK1 at the actomyosin contractile ring during cytokinesis. Interacts (via PPxY motif 2) with YAP1 (via WW domains). Interacts with MOB1A and MOB1B. Interacts with LIMD1, WTIP and AJUBA. Interacts with ESR1, DCAF1 and DCAF13; probably recruits DCAF1 and DCAF13 to ESR1 to promote ESR1 ubiquitination and ubiquitin-mediated proteasomal degradation. Interacts with STK3/MST2; this interaction is inhibited in the presence of DLG5. Interacts with SCRIB in the presence of DLG5. Interacts with WWTR1/TAZ. Interacts with WWC1, WWC2 and WWC3 (via their WW domains). Mg(2+) serves as cofactor. Post-translationally, autophosphorylated and phosphorylated during M-phase of the cell cycle. Phosphorylated by STK3/MST2 at Ser-908 and Thr-1078, which results in its activation. Phosphorylated by MAP4Ks; in parallel to STK3/MST2 and resulting to its activation. Phosphorylation at Ser-463 by NUAK1 and NUAK2 leads to decreased protein level and is required to regulate cellular senescence and cellular ploidy.

It is found in the cytoplasm. The protein localises to the cytoskeleton. The protein resides in the microtubule organizing center. It localises to the centrosome. Its subcellular location is the spindle. It is found in the midbody. The protein localises to the spindle pole body. The catalysed reaction is L-seryl-[protein] + ATP = O-phospho-L-seryl-[protein] + ADP + H(+). It carries out the reaction L-threonyl-[protein] + ATP = O-phospho-L-threonyl-[protein] + ADP + H(+). Negative regulator of YAP1 in the Hippo signaling pathway that plays a pivotal role in organ size control and tumor suppression by restricting proliferation and promoting apoptosis. The core of this pathway is composed of a kinase cascade wherein STK3/MST2 and STK4/MST1, in complex with its regulatory protein SAV1, phosphorylates and activates LATS1/2 in complex with its regulatory protein MOB1, which in turn phosphorylates and inactivates YAP1 oncoprotein and WWTR1/TAZ. Phosphorylation of YAP1 by LATS1 inhibits its translocation into the nucleus to regulate cellular genes important for cell proliferation, cell death, and cell migration. Acts as a tumor suppressor which plays a critical role in maintenance of ploidy through its actions in both mitotic progression and the G1 tetraploidy checkpoint. Negatively regulates G2/M transition by down-regulating CDK1 kinase activity. Involved in the control of p53 expression. Affects cytokinesis by regulating actin polymerization through negative modulation of LIMK1. May also play a role in endocrine function. Plays a role in mammary gland epithelial cell differentiation, both through the Hippo signaling pathway and the intracellular estrogen receptor signaling pathway by promoting the degradation of ESR1. Acts as an activator of the NLRP3 inflammasome by mediating phosphorylation of 'Ser-265' of NLRP3 following NLRP3 palmitoylation, promoting NLRP3 activation by NEK7. The protein is Serine/threonine-protein kinase LATS1 of Mus musculus (Mouse).